The sequence spans 983 residues: MDTEPNPGTSSVSTTTSSTTTTTITTSSSRMQQPQISVYSGSDRHAVQVIQQALHRPPSSAAQYLQQMYAAQQQHLMLHTAALQQQHLSSSQLQSLAAVQASLSSGRPSTSPTGSVTQQSSMSQTSINLSTSPTPAQLISRSQASSSTSGSITQQTMLLGSTSPTLTASQAQMYLRAQMLIFTPATTVAAVQSDIPVVSSSSSSSCQSAATQVQNLTLRSQKLGVLSSSQNGPPKSTSQTQSLTICHNKTTVTSSKISQRDPSPESNKKGESPSLESRSTAVTRTSSIHQLIAPASYSPIQPHSLIKHQQIPLHSPPSKVSHHQLILQQQQQQIQPITLQNSTQDPPPSQHCIPLQNHGLPPAPSNAQSQHCSPIQSHPSPLTVSPNQSQSAQQSVVVSPPPPHSPSQSPTIIIHPQALIQPHPLVSSALQPGPNLQQSTANQVQATAQLNLPSHLPLPASPVVHIGPVQQSALVSPGQQIVSPSHQQYSSLQSSPIPIASPPQMSTSPPAQIPPLPLQSMQSLQVQPEILSQGQVLVQNALVSEEELPAAEALVQLPFQTLPPPQTVAVNLQVQPPAPVDPPVVYQVEDVCEEEMPEESDECVRMDRTPPPPTLSPAAITVGRGEDLTSEHPLLEQVELPAVASVSASVIKSPSDPSHVSVPPPPLLLPAATTRSNSTSMHSSIPSIENKPPQAIVKPQILTHVIEGFVIQEGLEPFPVSRSSLLIEQPVKKRPLLDNQVINSVCVQPELQNNTKHADNSSDTEMEDMIAEETLEEMDSELLKCEFCGKMGYANEFLRSKRFCTMSCAKRYNVSCSKKFALSRWNRKPDNQSLGHRGRRPSGPDGAAREHILRQLPITYPSAEEDLASHEDSVPSAMTTRLRRQSERERERELRDVRIRKMPENSDLLPVAQTEPSIWTVDDVWAFIHSLPGCQDIADEFRAQEIDGQALLLLKEDHLMSAMNIKLGPALKICARINSLKES.

Disordered regions lie at residues 1-34, 103-149, 225-283, 313-332, 339-410, 477-509, and 601-620; these read MDTE…MQQP, LSSG…SSTS, VLSS…TAVT, LHSP…QQQQ, LQNS…SQSP, PGQQ…STSP, and DECV…PAAI. Composition is skewed to low complexity over residues 9–29 and 103–126; these read TSSV…TSSS and LSSG…SQTS. A compositionally biased stretch (polar residues) spans 127 to 139; sequence INLSTSPTPAQLI. Over residues 140-149 the composition is skewed to low complexity; sequence SRSQASSSTS. Polar residues predominate over residues 225-257; that stretch reads VLSSSQNGPPKSTSQTQSLTICHNKTTVTSSKI. Residues 258–271 show a composition bias toward basic and acidic residues; that stretch reads SQRDPSPESNKKGE. Serine 263 and serine 272 each carry phosphoserine. Polar residues predominate over residues 274 to 283; the sequence is SLESRSTAVT. Position 315 is a phosphoserine (serine 315). Polar residues predominate over residues 365 to 383; sequence SNAQSQHCSPIQSHPSPLT. Low complexity predominate over residues 384–398; that stretch reads VSPNQSQSAQQSVVV. Over residues 477–489 the composition is skewed to polar residues; it reads PGQQIVSPSHQQY. Residues 490–506 are compositionally biased toward low complexity; it reads SSLQSSPIPIASPPQMS. Residues threonine 609 and threonine 614 each carry the phosphothreonine modification. At serine 616 the chain carries Phosphoserine. Glycyl lysine isopeptide (Lys-Gly) (interchain with G-Cter in SUMO2) cross-links involve residues lysine 691 and lysine 732. The HD1 signature appears at 691 to 720; that stretch reads KPPQAIVKPQILTHVIEGFVIQEGLEPFPV. Phosphoserine occurs at positions 761 and 762. The FCS-type zinc-finger motif lies at 776–810; sequence EEMDSELLKCEFCGKMGYANEFLRSKRFCTMSCAK. Zn(2+) is bound by residues cysteine 785, cysteine 788, cysteine 804, and cysteine 808. Lysine 810 participates in a covalent cross-link: Glycyl lysine isopeptide (Lys-Gly) (interchain with G-Cter in SUMO2). Disordered stretches follow at residues 827–847 and 864–889; these read RKPD…PDGA and EEDL…SERE. The region spanning 919–983 is the SAM domain; it reads WTVDDVWAFI…CARINSLKES (65 aa).

As to quaternary structure, component of a PRC1-like complex.

Its subcellular location is the nucleus. Its function is as follows. Component of a Polycomb group (PcG) multiprotein PRC1-like complex, a complex class required to maintain the transcriptionally repressive state of many genes, including Hox genes, throughout development. PcG PRC1 complex acts via chromatin remodeling and modification of histones; it mediates monoubiquitination of histone H2A 'Lys-119', rendering chromatin heritably changed in its expressibility. The sequence is that of Polyhomeotic-like protein 3 (PHC3) from Homo sapiens (Human).